Reading from the N-terminus, the 389-residue chain is STE20-related kinase adapter protein alpha (389 aa).

The Protein kinase domain occupies 11-321 (YELLTIIGRG…AGALLNHPFF (311 aa)).

This sequence belongs to the protein kinase superfamily. STE Ser/Thr protein kinase family. STE20 subfamily. Component of a trimeric complex composed of STK11/LKB1, STRAD (STRADA or STRADB) and CAB39/MO25 (CAB39/MO25alpha or CAB39L/MO25beta): the complex tethers STK11/LKB1 in the cytoplasm and stimulates its catalytic activity. In terms of tissue distribution, expressed in brain, hypothalamus, heart and skeletal muscle.

The protein localises to the nucleus. Its subcellular location is the cytoplasm. Its function is as follows. Pseudokinase which, in complex with CAB39/MO25 (CAB39/MO25alpha or CAB39L/MO25beta), binds to and activates STK11/LKB1. Adopts a closed conformation typical of active protein kinases and binds STK11/LKB1 as a pseudosubstrate, promoting conformational change of STK11/LKB1 in an active conformation. The sequence is that of STE20-related kinase adapter protein alpha (STRADA) from Gallus gallus (Chicken).